We begin with the raw amino-acid sequence, 172 residues long: Bifunctional protein PyrR (172 aa).

Residues 36 to 37 (TG), Arg-77, 94 to 102 (DDVLMSGRT), and Val-151 each bind substrate. Residues 90-102 (LVLVDDVLMSGRT) carry the PRPP-binding motif.

It belongs to the purine/pyrimidine phosphoribosyltransferase family. PyrR subfamily.

The catalysed reaction is UMP + diphosphate = 5-phospho-alpha-D-ribose 1-diphosphate + uracil. Regulates the transcription of the pyrimidine nucleotide (pyr) operon in response to exogenous pyrimidines. In terms of biological role, also displays a weak uracil phosphoribosyltransferase activity which is not physiologically significant. The polypeptide is Bifunctional protein PyrR (Pseudomonas putida (Arthrobacter siderocapsulatus)).